A 202-amino-acid chain; its full sequence is Glycerol-3-phosphate acyltransferase (202 aa).

Helical transmembrane passes span 3-23 (ILLA…VVVS), 51-71 (KAAI…VWLV), 74-94 (FGIG…LGHL), 116-136 (AVHP…AFFF), and 140-160 (SLAA…LFGT).

This sequence belongs to the PlsY family. As to quaternary structure, probably interacts with PlsX.

It localises to the cell inner membrane. The catalysed reaction is an acyl phosphate + sn-glycerol 3-phosphate = a 1-acyl-sn-glycero-3-phosphate + phosphate. The protein operates within lipid metabolism; phospholipid metabolism. Catalyzes the transfer of an acyl group from acyl-phosphate (acyl-PO(4)) to glycerol-3-phosphate (G3P) to form lysophosphatidic acid (LPA). This enzyme utilizes acyl-phosphate as fatty acyl donor, but not acyl-CoA or acyl-ACP. In Burkholderia thailandensis (strain ATCC 700388 / DSM 13276 / CCUG 48851 / CIP 106301 / E264), this protein is Glycerol-3-phosphate acyltransferase.